We begin with the raw amino-acid sequence, 119 residues long: uncharacterized protein (119 aa).

This is an uncharacterized protein from Saccharomyces cerevisiae (strain ATCC 204508 / S288c) (Baker's yeast).